A 53-amino-acid polypeptide reads, in one-letter code: Conotoxin Vc5.3 (53 aa).

An N-terminal signal peptide occupies residues 1–15; that stretch reads VILLLLTASAPSVDA. Residues 16 to 41 constitute a propeptide that is removed on maturation; the sequence is RPKTEDVPLSSFRDNTKSTLQRLLKR.

Belongs to the conotoxin T superfamily. Post-translationally, contains 2 disulfide bonds that can be either 'C1-C3, C2-C4' or 'C1-C4, C2-C3', since these disulfide connectivities have been observed for conotoxins with cysteine framework V (for examples, see AC P0DQQ7 and AC P81755). In terms of tissue distribution, expressed by the venom duct.

Its subcellular location is the secreted. This chain is Conotoxin Vc5.3, found in Conus victoriae (Queen Victoria cone).